Here is a 73-residue protein sequence, read N- to C-terminus: Large ribosomal subunit protein bL31 (73 aa).

It belongs to the bacterial ribosomal protein bL31 family. Type A subfamily. As to quaternary structure, part of the 50S ribosomal subunit.

Its function is as follows. Binds the 23S rRNA. This chain is Large ribosomal subunit protein bL31 (rpmE), found in Roseobacter denitrificans (strain ATCC 33942 / OCh 114) (Erythrobacter sp. (strain OCh 114)).